Reading from the N-terminus, the 269-residue chain is GTP cyclohydrolase FolE2 (269 aa).

The protein belongs to the GTP cyclohydrolase IV family.

The catalysed reaction is GTP + H2O = 7,8-dihydroneopterin 3'-triphosphate + formate + H(+). It participates in cofactor biosynthesis; 7,8-dihydroneopterin triphosphate biosynthesis; 7,8-dihydroneopterin triphosphate from GTP: step 1/1. Converts GTP to 7,8-dihydroneopterin triphosphate. This Burkholderia mallei (strain NCTC 10229) protein is GTP cyclohydrolase FolE2.